Consider the following 176-residue polypeptide: Cathelicidin-2 (176 aa).

An N-terminal signal peptide occupies residues 1 to 29; it reads METQGASLSLGRWSLWLLLLGLVVPLASA. At Gln-30 the chain carries Pyrrolidone carboxylic acid. The propeptide occupies 30 to 130; that stretch reads QALSYREAVL…DINCNELQSV (101 aa). Disulfide bonds link Cys-85-Cys-96 and Cys-107-Cys-124. The tract at residues 135 to 176 is disordered; that stretch reads PIRRPPIRPPFNPPFRPPVRPPFRPPFRPPFRPPIGPFPGRR. The segment covering 141–176 has biased composition (pro residues); it reads IRPPFNPPFRPPVRPPFRPPFRPPFRPPIGPFPGRR. Pro-173 bears the Proline amide mark. The propeptide at 174–176 is removed in mature form; sequence GRR.

The protein belongs to the cathelicidin family. Post-translationally, elastase is responsible for its maturation.

It is found in the secreted. In terms of biological role, binds to the lipid A moiety of bacterial lipopolysaccharides (LPS), a glycolipid present in the outer membrane of all Gram-negative bacteria. Shows a potent antimicrobial activity against the Gram-negative bacteria E.coli, S.typhimurium and P.aeruginosa. Less active against the Gram-positive bacteria S.aureus, L.monocytogenes and B.subtilis. This is Cathelicidin-2 (CATHL2) from Capra hircus (Goat).